A 287-amino-acid chain; its full sequence is Complement C1q-like protein 2 (287 aa).

Residues methionine 1–alanine 21 form the signal peptide. The disordered stretch occupies residues leucine 65–glycine 144. One can recognise a Collagen-like domain in the interval glycine 76–glycine 118. Positions proline 84–proline 104 are enriched in pro residues. Positions glycine 127–aspartate 141 are enriched in gly residues. The 134-residue stretch at phenylalanine 154–aspartate 287 folds into the C1q domain.

In terms of assembly, forms homotrimers which can further assemble to form higher-order oligomeric complexes. Interacts with ADGRB3. May interact with ERFE. Forms heterooligomers with C1QL3 and C1QL4, when proteins are coexpressed; this interaction does not occur after secretion. In terms of processing, glycosylated, but not with N-linked glycans. In terms of tissue distribution, highest expression in eye, followed by placenta and brain, intermediate expression in adipose tissue and lowest expression in lymph node and testis.

Its subcellular location is the secreted. In terms of biological role, may regulate the number of excitatory synapses that are formed on hippocampus neurons. Has no effect on inhibitory synapses. The sequence is that of Complement C1q-like protein 2 (C1ql2) from Mus musculus (Mouse).